The primary structure comprises 85 residues: MKQYIFFLALIVLTATFAEAGKKTEILDKVKKVFSKGIAGVADLNNMSELGCPFIEKWCEDHCESKKQVGKCENFDCSCVKLGGK.

The first 20 residues, 1-20 (MKQYIFFLALIVLTATFAEA), serve as a signal peptide directing secretion. Positions 21–37 (GKKTEILDKVKKVFSKG) are excised as a propeptide. The BetaSPN-type CS-alpha/beta domain occupies 49 to 85 (ELGCPFIEKWCEDHCESKKQVGKCENFDCSCVKLGGK). Intrachain disulfides connect Cys52/Cys72, Cys59/Cys77, and Cys63/Cys79.

This sequence belongs to the long chain scorpion toxin family. Class 2 subfamily. In terms of tissue distribution, expressed by the venom gland.

It localises to the secreted. In terms of biological role, toxin with activity on voltage-gated potassium channels. Moderately and reversibly blocks up to 50% of the activity of Kv7.1/KCNQ1 (tested at 22 uM). 3D-structure modeling of the KCNQ1-toxin complex shows that the toxin interacts with the channel pore domain. Additionally, shows a very weak effect to block voltage-gated potassium channel Kv1.1/KCNA1. Has a very weak effect to block voltage-gated potassium channel Kv1.1/KCNA1. The sequence is that of Neurotoxin beta-KTx 14.3 from Lychas mucronatus (Chinese swimming scorpion).